Consider the following 464-residue polypeptide: 3-isopropylmalate dehydratase large subunit (464 aa).

The [4Fe-4S] cluster site is built by C345, C405, and C408.

This sequence belongs to the aconitase/IPM isomerase family. LeuC type 1 subfamily. In terms of assembly, heterodimer of LeuC and LeuD. Requires [4Fe-4S] cluster as cofactor.

It catalyses the reaction (2R,3S)-3-isopropylmalate = (2S)-2-isopropylmalate. The protein operates within amino-acid biosynthesis; L-leucine biosynthesis; L-leucine from 3-methyl-2-oxobutanoate: step 2/4. Its function is as follows. Catalyzes the isomerization between 2-isopropylmalate and 3-isopropylmalate, via the formation of 2-isopropylmaleate. The chain is 3-isopropylmalate dehydratase large subunit from Bacteroides thetaiotaomicron (strain ATCC 29148 / DSM 2079 / JCM 5827 / CCUG 10774 / NCTC 10582 / VPI-5482 / E50).